Reading from the N-terminus, the 263-residue chain is Glucosamine-6-phosphate deaminase (263 aa).

The Proton acceptor; for enolization step role is filled by Asp72. Asp141 functions as the For ring-opening step in the catalytic mechanism. Catalysis depends on His143, which acts as the Proton acceptor; for ring-opening step. Glu148 serves as the catalytic For ring-opening step.

This sequence belongs to the glucosamine/galactosamine-6-phosphate isomerase family. NagB subfamily.

It catalyses the reaction alpha-D-glucosamine 6-phosphate + H2O = beta-D-fructose 6-phosphate + NH4(+). The protein operates within amino-sugar metabolism; N-acetylneuraminate degradation; D-fructose 6-phosphate from N-acetylneuraminate: step 5/5. Its activity is regulated as follows. Allosterically activated by N-acetylglucosamine 6-phosphate (GlcNAc6P). Functionally, catalyzes the reversible isomerization-deamination of glucosamine 6-phosphate (GlcN6P) to form fructose 6-phosphate (Fru6P) and ammonium ion. This is Glucosamine-6-phosphate deaminase from Porphyromonas gingivalis (strain ATCC 33277 / DSM 20709 / CIP 103683 / JCM 12257 / NCTC 11834 / 2561).